Consider the following 442-residue polypeptide: Endothelin receptor type B (442 aa).

The first 26 residues, 1 to 26 (MQPPPSLCGRALVALVLACGLSRIWG), serve as a signal peptide directing secretion. Residues 27 to 101 (EERGFPPDRA…GSIEIKETFK (75 aa)) lie on the Extracellular side of the membrane. An N-linked (GlcNAc...) asparagine glycan is attached at Asn-59. The interval 69–88 (AEVPKGDRTAGSPPRTISPP) is disordered. The chain crosses the membrane as a helical span at residues 102–126 (YINTVVSCLVFVLGIIGNSTLLRII). The Cytoplasmic segment spans residues 127–137 (YKNKCMRNGPN). The helical transmembrane segment at 138-163 (ILIASLALGDLLHIIIDIPITVYKLL) threads the bilayer. At 164–175 (AEDWPFGVEMCK) the chain is on the extracellular side. An intrachain disulfide couples Cys-174 to Cys-255. A helical transmembrane segment spans residues 176-197 (LVPFIQKASVGITVLSLCALSI). Residues 198–218 (DRYRAVASWSRIKGIGVPKWT) are Cytoplasmic-facing. Residues 219 to 243 (AVEIVLIWVVSVVLAVPEAVGFDMI) traverse the membrane as a helical segment. The Extracellular portion of the chain corresponds to 244–271 (TIDYKGRYLRICLLHPTQKTAFMQFYKT). The chain crosses the membrane as a helical span at residues 272–296 (AKDWWLFSFYFCLPLAITAFFYTLM). Topologically, residues 297–324 (TCEMLRKKSGMQIALNDHLKQRREVAKT) are cytoplasmic. Ser-305 carries the post-translational modification Phosphoserine. The chain crosses the membrane as a helical span at residues 325–350 (VFCLVLVFALCWLPLHLSRILKLTIY). Over 351–362 (DQNDPNRCELLS) the chain is Extracellular. A helical membrane pass occupies residues 363–389 (FLLVLDYIGINMASLNSCINPIALYLV). The Cytoplasmic portion of the chain corresponds to 390 to 442 (SKRFKNCFKSCLCCWCQSFEEKQSLEEKQSCLKFKANDHGYDNFRSSNKYSSS). Residues Cys-402, Cys-403, and Cys-405 are each lipidated (S-palmitoyl cysteine). The residue at position 419 (Ser-419) is a Phosphoserine. Tyr-439 bears the Phosphotyrosine mark. Phosphoserine occurs at positions 440, 441, and 442.

The protein belongs to the G-protein coupled receptor 1 family. Endothelin receptor subfamily. EDNRB sub-subfamily.

It localises to the cell membrane. In terms of biological role, non-specific receptor for endothelin 1, 2, and 3. Mediates its action by association with G proteins that activate a phosphatidylinositol-calcium second messenger system. This chain is Endothelin receptor type B (EDNRB), found in Canis lupus familiaris (Dog).